The following is a 198-amino-acid chain: Holliday junction branch migration complex subunit RuvA (198 aa).

The segment at 1-63 (MIAYLSGAVR…EDAQLLFGFL (63 aa)) is domain I. Positions 64-142 (DTDSLRLFDL…EHLAAGAPVS (79 aa)) are domain II. The tract at residues 143–150 (AGKAALTS) is flexible linker. The segment at 150–198 (STAGRDAIEALLALGFREPQVRSVVAELLAADPEQSADALIRKGLGKLR) is domain III.

This sequence belongs to the RuvA family. In terms of assembly, homotetramer. Forms an RuvA(8)-RuvB(12)-Holliday junction (HJ) complex. HJ DNA is sandwiched between 2 RuvA tetramers; dsDNA enters through RuvA and exits via RuvB. An RuvB hexamer assembles on each DNA strand where it exits the tetramer. Each RuvB hexamer is contacted by two RuvA subunits (via domain III) on 2 adjacent RuvB subunits; this complex drives branch migration. In the full resolvosome a probable DNA-RuvA(4)-RuvB(12)-RuvC(2) complex forms which resolves the HJ.

The protein resides in the cytoplasm. The RuvA-RuvB-RuvC complex processes Holliday junction (HJ) DNA during genetic recombination and DNA repair, while the RuvA-RuvB complex plays an important role in the rescue of blocked DNA replication forks via replication fork reversal (RFR). RuvA specifically binds to HJ cruciform DNA, conferring on it an open structure. The RuvB hexamer acts as an ATP-dependent pump, pulling dsDNA into and through the RuvAB complex. HJ branch migration allows RuvC to scan DNA until it finds its consensus sequence, where it cleaves and resolves the cruciform DNA. In Deinococcus geothermalis (strain DSM 11300 / CIP 105573 / AG-3a), this protein is Holliday junction branch migration complex subunit RuvA.